The primary structure comprises 467 residues: Putative laccase-16 (467 aa).

Plastocyanin-like domains are found at residues 7–88, 98–225, and 318–451; these read VLGS…PKHG, KEIP…YTDS, and DFPN…KDGK. Residues H22, H24, H67, and H69 each contribute to the Cu cation site. 8 residues coordinate Cu cation: H368, H371, H373, H430, C431, H432, H436, and M441.

The protein belongs to the multicopper oxidase family. It depends on Cu cation as a cofactor.

The protein resides in the secreted. It localises to the extracellular space. It is found in the apoplast. It carries out the reaction 4 hydroquinone + O2 = 4 benzosemiquinone + 2 H2O. Functionally, lignin degradation and detoxification of lignin-derived products. This is Putative laccase-16 (LAC16) from Oryza sativa subsp. japonica (Rice).